Consider the following 361-residue polypeptide: MSTATPLAPTPVTTTDVLIVGAGPVGLFAAFQAGVLGLRCELIDVLDRAGGQCTELYPEKPIYDIPAVPGCLAQDLVDRLLEQCAPFAFPMHFGQRAESLSEIPRQPAPDGHAAHERLLVTTDGGKRFDVSAVLICAGAGAFAPQRVSLPEAPALEGRHVHYAVRDVSRFAGKRVVVAGGGDSALDWALALRKVAARVTLLHRREGFRAADGTVAEMREAVAAGEMDFVVGMLGALRTEGQDGPLTEVEVRTRDGSTVLPADELVALYGLVSEPGPIAQWDMDMRAGRILVDTTTYESSRRGIFAAGDIAYYTNKQKLILSGFHEAALALRRAYHYAFPEKALVHVHTSNNAALKEKLTHA.

FAD is bound by residues D44, Q52, Y57, A97, F142, D308, and S349.

It belongs to the ferredoxin--NADP reductase type 2 family. As to quaternary structure, homodimer. Requires FAD as cofactor.

The enzyme catalyses 2 reduced [2Fe-2S]-[ferredoxin] + NADP(+) + H(+) = 2 oxidized [2Fe-2S]-[ferredoxin] + NADPH. The sequence is that of Ferredoxin--NADP reductase 1 from Cupriavidus necator (strain ATCC 17699 / DSM 428 / KCTC 22496 / NCIMB 10442 / H16 / Stanier 337) (Ralstonia eutropha).